Here is a 729-residue protein sequence, read N- to C-terminus: DNA topoisomerase 3 (729 aa).

One can recognise a Toprim domain in the interval 3–136; sequence KSVVIAEKPS…IKRLWISSVT (134 aa). Residues Glu9 and Asp105 each coordinate Mg(2+). Residues 153–594 enclose the Topo IA-type catalytic domain; that stretch reads YDNLYASAVA…EMKNYTKEIV (442 aa). Positions 187 to 192 are interaction with DNA; the sequence is NCGRVQ. Tyr310 functions as the O-(5'-phospho-DNA)-tyrosine intermediate in the catalytic mechanism. Residues 686-713 are compositionally biased toward basic and acidic residues; the sequence is ERRKKESGNKADKRDVQKYMKQQNKEEE. The segment at 686–719 is disordered; the sequence is ERRKKESGNKADKRDVQKYMKQQNKEEEPLNNPF.

Belongs to the type IA topoisomerase family. Requires Mg(2+) as cofactor.

The catalysed reaction is ATP-independent breakage of single-stranded DNA, followed by passage and rejoining.. Releases the supercoiling and torsional tension of DNA, which is introduced during the DNA replication and transcription, by transiently cleaving and rejoining one strand of the DNA duplex. Introduces a single-strand break via transesterification at a target site in duplex DNA. The scissile phosphodiester is attacked by the catalytic tyrosine of the enzyme, resulting in the formation of a DNA-(5'-phosphotyrosyl)-enzyme intermediate and the expulsion of a 3'-OH DNA strand. The free DNA strand then undergoes passage around the unbroken strand, thus removing DNA supercoils. Finally, in the religation step, the DNA 3'-OH attacks the covalent intermediate to expel the active-site tyrosine and restore the DNA phosphodiester backbone. In Bacillus cereus (strain ATCC 14579 / DSM 31 / CCUG 7414 / JCM 2152 / NBRC 15305 / NCIMB 9373 / NCTC 2599 / NRRL B-3711), this protein is DNA topoisomerase 3.